The sequence spans 376 residues: PqqA peptide cyclase (376 aa).

Positions 4-219 constitute a Radical SAM core domain; that stretch reads VPPPLSVLLE…VETARRSLGD (216 aa). [4Fe-4S] cluster is bound by residues C18, C22, and C25.

It belongs to the radical SAM superfamily. PqqE family. As to quaternary structure, interacts with PqqD. The interaction is necessary for activity of PqqE. The cofactor is [4Fe-4S] cluster.

The enzyme catalyses [PQQ precursor protein] + S-adenosyl-L-methionine = E-Y cross-linked-[PQQ precursor protein] + 5'-deoxyadenosine + L-methionine + H(+). Its pathway is cofactor biosynthesis; pyrroloquinoline quinone biosynthesis. In terms of biological role, catalyzes the cross-linking of a glutamate residue and a tyrosine residue in the PqqA protein as part of the biosynthesis of pyrroloquinoline quinone (PQQ). The chain is PqqA peptide cyclase from Xanthomonas campestris pv. campestris (strain 8004).